Consider the following 746-residue polypeptide: Disintegrin and metalloproteinase domain-containing protein 18 (746 aa).

Positions 1 to 16 (MFFLLALLTELGRLQA) are cleaved as a signal peptide. The propeptide occupies 17–183 (HVGSEGIFLH…QKKNLSKLLP (167 aa)). Asn-36, Asn-122, Asn-149, Asn-156, Asn-177, and Asn-294 each carry an N-linked (GlcNAc...) asparagine glycan. Residues 177–687 (NLSKLLPQYL…EKGYNAHWNN (511 aa)) lie on the Extracellular side of the membrane. Positions 184–381 (QYLEIYIIVE…FEAKCLQKLS (198 aa)) constitute a Peptidase M12B domain. 4 disulfide bridges follow: Cys-293–Cys-376, Cys-335–Cys-360, Cys-337–Cys-342, and Cys-450–Cys-471. 4 N-linked (GlcNAc...) asparagine glycosylation sites follow: Asn-359, Asn-465, Asn-611, and Asn-625. The Disintegrin domain occupies 390 to 479 (QPVCGNGILE…DCVPDTYALN (90 aa)). Residues 620–654 (TGYNCNTTTKCKGKGICNNFGNCQCFPGHKPPDCK) form the EGF-like domain. 3 disulfide bridges follow: Cys-624–Cys-636, Cys-630–Cys-642, and Cys-644–Cys-653. Residues 688–708 (WFILSFYIVLPFFIIFTIVIF) traverse the membrane as a helical segment. Topologically, residues 709–746 (KRNEIRKLCNRENTELIHPLYQKAMMWNINIAQNFRSK) are cytoplasmic.

The prodomain and the metalloprotease-like domain are cleaved during the epididymal maturation of the spermatozoa. As to expression, expressed predominantly in adult and prepubertal testis.

The protein resides in the membrane. Its function is as follows. Sperm surface membrane protein that may be involved in spermatogenesis and fertilization. This is a non catalytic metalloprotease-like protein. The polypeptide is Disintegrin and metalloproteinase domain-containing protein 18 (ADAM18) (Macaca fascicularis (Crab-eating macaque)).